Here is a 597-residue protein sequence, read N- to C-terminus: Probable bifunctional ADP-ribose hydrolase/ADP-ribosyltransferase (597 aa).

The Macro domain maps to 99 to 299; the sequence is SRLIKHGDLG…FYSKLLGPSH (201 aa). Residues D118, I119, and N133 each coordinate ADP-D-ribose. Zn(2+) contacts are provided by C139, H144, and C146. C146, I147, D148, S244, T245, G246, and F248 together coordinate ADP-D-ribose. The 291-residue stretch at 307 to 597 folds into the Deacetylase sirtuin-type domain; sequence ENTPQGSLSL…IGRAIPLLLE (291 aa). NAD(+) contacts are provided by residues A333, 418 to 421, and Q438; that span reads SNAD. Residues C446, C450, C485, and C488 each coordinate Zn(2+). Position 584 (V584) interacts with NAD(+).

This sequence in the N-terminal section; belongs to the MacroD-type family. Zn-Macro subfamily. It in the C-terminal section; belongs to the sirtuin family. Class M subfamily. Monomer. Zn(2+) is required as a cofactor.

The catalysed reaction is 5-O-(ADP-D-ribosyl)-L-glutamyl-[protein] + H2O = L-glutamyl-[protein] + ADP-D-ribose + H(+). Functionally, is probably a bifunctional enzyme with ADP-ribosyltransferase and ADP-ribosylhydrolase activities. In vitro, can act as an ADP-ribosylhydrolase that hydrolyzes ADP-ribosyl-glutamate bonds. It can remove the ADP-ribosyl modification from the human mono-ADP-ribosylated PARP1 E988Q mutant, which is primarily modified on glutamate site with only minor aspartate contribution. It cannot hydrolyze the ADP-ribosyl-arpartate bond in ribosylated S.pyogenes GcvH-L. This Fusarium oxysporum f. sp. cubense protein is Probable bifunctional ADP-ribose hydrolase/ADP-ribosyltransferase.